A 177-amino-acid polypeptide reads, in one-letter code: Anti-apoptotic protein NR13 (177 aa).

Positions 75–94 (LEAEGGLNWGRLLALVVFTG) match the BH1 motif. A helical membrane pass occupies residues 86 to 106 (LLALVVFTGTLAAALAESGCE). The short motif at 126–141 (EWLEEHGGWDGFCRFF) is the BH2 element. The chain crosses the membrane as a helical span at residues 156 to 176 (SNAIMAAAGFGIAGLAFLLVV).

This sequence belongs to the Bcl-2 family. In terms of assembly, interacts with BAX. In terms of tissue distribution, expressed preferentially in heart, skeletal muscle, retina, optical tectum and bursa of Fabricius.

It is found in the cell membrane. In terms of biological role, shows anti-apoptotic properties. Counteract the pro-apoptotic activity of BAX. This chain is Anti-apoptotic protein NR13 (NR13), found in Gallus gallus (Chicken).